The following is a 328-amino-acid chain: Carbonic anhydrase-related protein 10 (328 aa).

The Alpha-carbonic anhydrase domain maps to 31 to 301 (GWWAYKEVVQ…LNNRCIRTNI (271 aa)).

This sequence belongs to the alpha-carbonic anhydrase family.

In terms of biological role, does not have a catalytic activity. In Bos taurus (Bovine), this protein is Carbonic anhydrase-related protein 10 (CA10).